Here is a 204-residue protein sequence, read N- to C-terminus: HTH-type transcriptional repressor KstR (204 aa).

An HTH tetR-type domain is found at 18 to 78; sequence RERRKRILDA…SALGREFERI (61 aa). Residues 41 to 60 constitute a DNA-binding region (H-T-H motif); that stretch reads QMRAVAERADVAVGTLYRYF.

As to quaternary structure, homodimer.

Functionally, controls the expression of genes used for utilizing diverse lipids as energy sources. The protein is HTH-type transcriptional repressor KstR (kstR) of Mycolicibacterium smegmatis (strain ATCC 700084 / mc(2)155) (Mycobacterium smegmatis).